The primary structure comprises 310 residues: Olfactory receptor 4K14 (310 aa).

Residues 1–25 (MDPQNYSLVSEFVLHGLCTSRHLQN) are Extracellular-facing. A glycan (N-linked (GlcNAc...) asparagine) is linked at N5. The chain crosses the membrane as a helical span at residues 26–49 (FFFIFFFGVYVAIMLGNLLILVTV). Over 50 to 58 (ISDPCLHSS) the chain is Cytoplasmic. Residues 59 to 80 (PMYFLLGNLAFLDMWLASFATP) traverse the membrane as a helical segment. Residues 81–101 (KMIRDFLSDQKLISFGGCMAQ) are Extracellular-facing. C98 and C190 form a disulfide bridge. The chain crosses the membrane as a helical span at residues 102–121 (IFFLHFTGGAEMVLLVSMAY). Topologically, residues 122–140 (DRYVAICKPLHYMTLMSWQ) are cytoplasmic. A helical transmembrane segment spans residues 141–159 (TCIRLVLASWVVGFVHSIS). The Extracellular portion of the chain corresponds to 160–196 (QVAFTVNLPYCGPNEVDSFFCDLPLVIKLACMDTYVL). The helical transmembrane segment at 197–220 (GIIMISDSGLLSLSCFLLLLISYT) threads the bilayer. Residues 221–236 (VILLAIRQRAAGSTSK) lie on the Cytoplasmic side of the membrane. A helical membrane pass occupies residues 237-259 (ALSTCSAHIMVVTLFFGPCIFVY). Topologically, residues 260–270 (VRPFSRFSVDK) are extracellular. The chain crosses the membrane as a helical span at residues 271–290 (LLSVFYTIFTPLLNPIIYTL). Residues 291–310 (RNEEMKAAMKKLQNRRVTFQ) lie on the Cytoplasmic side of the membrane.

This sequence belongs to the G-protein coupled receptor 1 family.

Its subcellular location is the cell membrane. Odorant receptor. This is Olfactory receptor 4K14 (OR4K14) from Homo sapiens (Human).